The primary structure comprises 344 residues: Ketol-acid reductoisomerase (NADP(+)) (344 aa).

Positions 2 to 181 (EKIYYDADIS…GAGRAGILTT (180 aa)) constitute a KARI N-terminal Rossmann domain. NADP(+) contacts are provided by residues 25-28 (YGSQ), Arg48, Ser52, and 82-85 (DERQ). Residue His107 is part of the active site. Gly133 contacts NADP(+). One can recognise a KARI C-terminal knotted domain in the interval 182-327 (TFREETETDL…RKLRSMMPFI (146 aa)). Residues Asp190, Glu194, Glu226, and Glu230 each contribute to the Mg(2+) site. Ser251 lines the substrate pocket.

It belongs to the ketol-acid reductoisomerase family. The cofactor is Mg(2+).

The enzyme catalyses (2R)-2,3-dihydroxy-3-methylbutanoate + NADP(+) = (2S)-2-acetolactate + NADPH + H(+). It carries out the reaction (2R,3R)-2,3-dihydroxy-3-methylpentanoate + NADP(+) = (S)-2-ethyl-2-hydroxy-3-oxobutanoate + NADPH + H(+). The protein operates within amino-acid biosynthesis; L-isoleucine biosynthesis; L-isoleucine from 2-oxobutanoate: step 2/4. It participates in amino-acid biosynthesis; L-valine biosynthesis; L-valine from pyruvate: step 2/4. Its function is as follows. Involved in the biosynthesis of branched-chain amino acids (BCAA). Catalyzes an alkyl-migration followed by a ketol-acid reduction of (S)-2-acetolactate (S2AL) to yield (R)-2,3-dihydroxy-isovalerate. In the isomerase reaction, S2AL is rearranged via a Mg-dependent methyl migration to produce 3-hydroxy-3-methyl-2-ketobutyrate (HMKB). In the reductase reaction, this 2-ketoacid undergoes a metal-dependent reduction by NADPH to yield (R)-2,3-dihydroxy-isovalerate. The chain is Ketol-acid reductoisomerase (NADP(+)) from Alicyclobacillus acidocaldarius subsp. acidocaldarius (strain ATCC 27009 / DSM 446 / BCRC 14685 / JCM 5260 / KCTC 1825 / NBRC 15652 / NCIMB 11725 / NRRL B-14509 / 104-IA) (Bacillus acidocaldarius).